The primary structure comprises 396 residues: Acetate kinase (396 aa).

Asn-8 is a Mg(2+) binding site. Lys-15 contacts ATP. Residue Arg-89 participates in substrate binding. Catalysis depends on Asp-146, which acts as the Proton donor/acceptor. ATP is bound by residues 206-210 (HLGNG), 281-283 (DLR), and 329-333 (GIGEN). Glu-382 is a binding site for Mg(2+).

Belongs to the acetokinase family. Homodimer. Requires Mg(2+) as cofactor. Mn(2+) is required as a cofactor.

It is found in the cytoplasm. The enzyme catalyses acetate + ATP = acetyl phosphate + ADP. It functions in the pathway metabolic intermediate biosynthesis; acetyl-CoA biosynthesis; acetyl-CoA from acetate: step 1/2. Its function is as follows. Catalyzes the formation of acetyl phosphate from acetate and ATP. Can also catalyze the reverse reaction. The sequence is that of Acetate kinase from Geobacillus kaustophilus (strain HTA426).